Reading from the N-terminus, the 323-residue chain is 4-hydroxy-3-methylbut-2-enyl diphosphate reductase (323 aa).

C12 provides a ligand contact to [4Fe-4S] cluster. 2 residues coordinate (2E)-4-hydroxy-3-methylbut-2-enyl diphosphate: H43 and H81. Residues H43 and H81 each coordinate dimethylallyl diphosphate. The isopentenyl diphosphate site is built by H43 and H81. C103 is a binding site for [4Fe-4S] cluster. H131 contacts (2E)-4-hydroxy-3-methylbut-2-enyl diphosphate. Residue H131 participates in dimethylallyl diphosphate binding. H131 contributes to the isopentenyl diphosphate binding site. Residue E133 is the Proton donor of the active site. (2E)-4-hydroxy-3-methylbut-2-enyl diphosphate is bound at residue T170. C198 provides a ligand contact to [4Fe-4S] cluster. (2E)-4-hydroxy-3-methylbut-2-enyl diphosphate is bound by residues S226, N228, and S271. S226, N228, and S271 together coordinate dimethylallyl diphosphate. S226, N228, and S271 together coordinate isopentenyl diphosphate.

It belongs to the IspH family. The cofactor is [4Fe-4S] cluster.

The enzyme catalyses isopentenyl diphosphate + 2 oxidized [2Fe-2S]-[ferredoxin] + H2O = (2E)-4-hydroxy-3-methylbut-2-enyl diphosphate + 2 reduced [2Fe-2S]-[ferredoxin] + 2 H(+). The catalysed reaction is dimethylallyl diphosphate + 2 oxidized [2Fe-2S]-[ferredoxin] + H2O = (2E)-4-hydroxy-3-methylbut-2-enyl diphosphate + 2 reduced [2Fe-2S]-[ferredoxin] + 2 H(+). It participates in isoprenoid biosynthesis; dimethylallyl diphosphate biosynthesis; dimethylallyl diphosphate from (2E)-4-hydroxy-3-methylbutenyl diphosphate: step 1/1. Its pathway is isoprenoid biosynthesis; isopentenyl diphosphate biosynthesis via DXP pathway; isopentenyl diphosphate from 1-deoxy-D-xylulose 5-phosphate: step 6/6. Catalyzes the conversion of 1-hydroxy-2-methyl-2-(E)-butenyl 4-diphosphate (HMBPP) into a mixture of isopentenyl diphosphate (IPP) and dimethylallyl diphosphate (DMAPP). Acts in the terminal step of the DOXP/MEP pathway for isoprenoid precursor biosynthesis. The polypeptide is 4-hydroxy-3-methylbut-2-enyl diphosphate reductase (Lysinibacillus sphaericus (strain C3-41)).